A 184-amino-acid chain; its full sequence is ATP synthase subunit b, chloroplastic (184 aa).

The helical transmembrane segment at 27-49 (LATNPINLSVVLGVLIFFGKGVL) threads the bilayer.

Belongs to the ATPase B chain family. In terms of assembly, F-type ATPases have 2 components, F(1) - the catalytic core - and F(0) - the membrane proton channel. F(1) has five subunits: alpha(3), beta(3), gamma(1), delta(1), epsilon(1). F(0) has four main subunits: a(1), b(1), b'(1) and c(10-14). The alpha and beta chains form an alternating ring which encloses part of the gamma chain. F(1) is attached to F(0) by a central stalk formed by the gamma and epsilon chains, while a peripheral stalk is formed by the delta, b and b' chains.

The protein resides in the plastid. The protein localises to the chloroplast thylakoid membrane. Its function is as follows. F(1)F(0) ATP synthase produces ATP from ADP in the presence of a proton or sodium gradient. F-type ATPases consist of two structural domains, F(1) containing the extramembraneous catalytic core and F(0) containing the membrane proton channel, linked together by a central stalk and a peripheral stalk. During catalysis, ATP synthesis in the catalytic domain of F(1) is coupled via a rotary mechanism of the central stalk subunits to proton translocation. In terms of biological role, component of the F(0) channel, it forms part of the peripheral stalk, linking F(1) to F(0). The sequence is that of ATP synthase subunit b, chloroplastic from Citrus sinensis (Sweet orange).